A 462-amino-acid polypeptide reads, in one-letter code: UDP-N-acetylmuramoylalanine--D-glutamate ligase (462 aa).

117-123 is an ATP binding site; that stretch reads GTNGKTT.

It belongs to the MurCDEF family.

The protein localises to the cytoplasm. It catalyses the reaction UDP-N-acetyl-alpha-D-muramoyl-L-alanine + D-glutamate + ATP = UDP-N-acetyl-alpha-D-muramoyl-L-alanyl-D-glutamate + ADP + phosphate + H(+). It functions in the pathway cell wall biogenesis; peptidoglycan biosynthesis. In terms of biological role, cell wall formation. Catalyzes the addition of glutamate to the nucleotide precursor UDP-N-acetylmuramoyl-L-alanine (UMA). This Synechococcus sp. (strain CC9902) protein is UDP-N-acetylmuramoylalanine--D-glutamate ligase.